Consider the following 159-residue polypeptide: 17 kDa surface antigen (159 aa).

Positions 1–19 are cleaved as a signal peptide; it reads MKLLSKIMIIALATSMLQA. The N-palmitoyl cysteine moiety is linked to residue Cys-20. Residue Cys-20 is the site of S-diacylglycerol cysteine attachment.

The protein belongs to the rickettsiale 17 kDa surface antigen family.

It is found in the cell outer membrane. This chain is 17 kDa surface antigen (omp), found in Rickettsia japonica (strain ATCC VR-1363 / YH).